Here is a 71-residue protein sequence, read N- to C-terminus: Large ribosomal subunit protein bL31 (71 aa).

Zn(2+)-binding residues include cysteine 16, cysteine 18, cysteine 37, and cysteine 40.

Belongs to the bacterial ribosomal protein bL31 family. Type A subfamily. In terms of assembly, part of the 50S ribosomal subunit. Zn(2+) is required as a cofactor.

In terms of biological role, binds the 23S rRNA. This is Large ribosomal subunit protein bL31 from Chromohalobacter salexigens (strain ATCC BAA-138 / DSM 3043 / CIP 106854 / NCIMB 13768 / 1H11).